A 246-amino-acid polypeptide reads, in one-letter code: Mast cell protease 1 (246 aa).

An N-terminal signal peptide occupies residues 1–18 (MQALLFLMALLLPSGAGA). Residues 19-20 (EE) constitute a propeptide, activation peptide. A Peptidase S1 domain is found at 21 to 244 (IIGGVEARPH…YVPWIKTVIN (224 aa)). A disulfide bridge connects residues C50 and C66. Catalysis depends on H65, which acts as the Charge relay system. N102 carries an N-linked (GlcNAc...) asparagine glycan. D109 acts as the Charge relay system in catalysis. 2 cysteine pairs are disulfide-bonded: C143-C208 and C174-C187. S202 acts as the Charge relay system in catalysis.

The protein belongs to the peptidase S1 family. Granzyme subfamily. Mucosal mast cells.

The protein localises to the secreted. Its subcellular location is the cytoplasmic granule. Functionally, has a chymotrypsin-like activity. The chain is Mast cell protease 1 (Mcpt1) from Mus musculus (Mouse).